The primary structure comprises 555 residues: Potassium-transporting ATPase potassium-binding subunit (555 aa).

Helical transmembrane passes span 2-22, 60-80, 130-150, 173-193, 246-266, 278-298, 374-394, 412-432, 483-503, and 525-545; these read IWVA…PTGI, QYAL…YFIF, IGIT…VMAF, VFLP…VPQT, MSNI…PFTY, ILFV…TTSE, AGFV…GLMV, LIAV…ALAL, LVMF…AASL, and GIFI…MLVL.

Belongs to the KdpA family. As to quaternary structure, the system is composed of three essential subunits: KdpA, KdpB and KdpC.

Its subcellular location is the cell membrane. Functionally, part of the high-affinity ATP-driven potassium transport (or Kdp) system, which catalyzes the hydrolysis of ATP coupled with the electrogenic transport of potassium into the cytoplasm. This subunit binds the extracellular potassium ions and delivers the ions to the membrane domain of KdpB through an intramembrane tunnel. This chain is Potassium-transporting ATPase potassium-binding subunit, found in Bacillus anthracis (strain A0248).